A 291-amino-acid polypeptide reads, in one-letter code: Nucleotide-binding protein PPA0813 (291 aa).

Gly-17 to Arg-24 contributes to the ATP binding site. Asp-66–Ser-69 contributes to the GTP binding site.

The protein belongs to the RapZ-like family.

Its function is as follows. Displays ATPase and GTPase activities. The sequence is that of Nucleotide-binding protein PPA0813 from Cutibacterium acnes (strain DSM 16379 / KPA171202) (Propionibacterium acnes).